Consider the following 240-residue polypeptide: uncharacterized protein (240 aa).

2 helical membrane-spanning segments follow: residues 16–36 (AVFFLYAALAIIGFAIGYFIP) and 67–87 (FITALLGMCAGIWFAHSVIAM).

The protein resides in the cell membrane. This is an uncharacterized protein from Bacillus subtilis (strain 168).